Consider the following 235-residue polypeptide: Vacuolar protein sorting-associated protein 60.1 (235 aa).

The disordered stretch occupies residues 1-29 (MRRVFGAKKNTEPPPSIQDASDRINKRGD). Positions 20 to 29 (ASDRINKRGD) are enriched in basic and acidic residues. Residues 99 to 148 (LKDAQQTMTALKSANKELKGMMKTVKIQDIDNLQDEMMDLMDVSSEIQES) are a coiled coil. The interval 175–235 (MGNETEADGM…PAVPRASLRG (61 aa)) is disordered.

This sequence belongs to the SNF7 family. Interacts with SKD1/VPS4 and LIP5. Interacts with VPS2.2.

The protein resides in the endosome. It is found in the multivesicular body membrane. Probable peripherally associated component of the endosomal sorting required for transport complex III (ESCRT-III) which is involved in multivesicular bodies (MVBs) formation and sorting of endosomal cargo proteins into MVBs. The polypeptide is Vacuolar protein sorting-associated protein 60.1 (Arabidopsis thaliana (Mouse-ear cress)).